The primary structure comprises 435 residues: NADH-quinone oxidoreductase subunit D (435 aa).

The protein belongs to the complex I 49 kDa subunit family. In terms of assembly, NDH-1 is composed of 14 different subunits. Subunits NuoB, C, D, E, F, and G constitute the peripheral sector of the complex.

The protein resides in the cell membrane. It catalyses the reaction a quinone + NADH + 5 H(+)(in) = a quinol + NAD(+) + 4 H(+)(out). Its function is as follows. NDH-1 shuttles electrons from NADH, via FMN and iron-sulfur (Fe-S) centers, to quinones in the respiratory chain. The immediate electron acceptor for the enzyme in this species is believed to be ubiquinone. Couples the redox reaction to proton translocation (for every two electrons transferred, four hydrogen ions are translocated across the cytoplasmic membrane), and thus conserves the redox energy in a proton gradient. In Stenotrophomonas maltophilia (strain K279a), this protein is NADH-quinone oxidoreductase subunit D.